Reading from the N-terminus, the 546-residue chain is Oncoprotein-induced transcript 3 protein (546 aa).

The signal sequence occupies residues 1–19 (MPLSLLLTCLSTTVTLVSP). 2 N-linked (GlcNAc...) asparagine glycosylation sites follow: Asn89 and Asn116. The EGF-like; calcium-binding domain occupies 182 to 222 (DENECEHNNGGCSEICVNLKNSHRCACGVGRVLRSDGKTCE). 3 disulfides stabilise this stretch: Cys186-Cys197, Cys193-Cys206, and Cys208-Cys221. Residues 261–516 (TCQVPVLCKS…SRCAQGCHRR (256 aa)) enclose the ZP domain. An N-linked (GlcNAc...) asparagine glycan is attached at Asn299.

In terms of tissue distribution, liver-specific. Expressed only in the hepatocytes.

It is found in the nucleus envelope. Its function is as follows. May be involved in hepatocellular function and development. In Mus musculus (Mouse), this protein is Oncoprotein-induced transcript 3 protein (Oit3).